We begin with the raw amino-acid sequence, 589 residues long: Kelch-like protein 25 (589 aa).

Residues 46-114 enclose the BTB domain; it reads TDMTLWAGNR…AYSSKIIINE (69 aa). Positions 149 to 250 constitute a BACK domain; that stretch reads CLGMMILSDA…LPSELLKEAV (102 aa). Kelch repeat units follow at residues 296–340, 341–388, 389–444, 446–492, 494–538, and 539–585; these read TLLI…AIGC, KVYI…ELDN, CLYV…SAKL, LFVF…VLGS, IFIM…ASGN, and KVYV…STWK.

Component of the BCR(KLHL25) E3 ubiquitin ligase complex, at least composed of cul3, klhl25 and rbx1.

It participates in protein modification; protein ubiquitination. Its function is as follows. Substrate-specific adapter of a BCR (BTB-CUL3-RBX1) E3 ubiquitin ligase complex involved in various processes, such as translation homeostasis and lipid synthesis. The BCR(KLHL25) ubiquitin ligase complex acts by mediating ubiquitination of hypophosphorylated eif4ebp1 (4E-BP1): ubiquitination and subsequent degradation of hypophosphorylated EIF4EBP1 (4E-BP1) probably serves as a homeostatic mechanism to maintain translation and prevent eIF4E inhibition when eIF4E levels are low. The BCR(KLHL25) complex also acts as a regulator of lipid synthesis by mediating ubiquitination and degradation of ACLY, thereby inhibiting lipid synthesis. This chain is Kelch-like protein 25, found in Xenopus laevis (African clawed frog).